The sequence spans 569 residues: Probable santalene synthase (569 aa).

(2E)-geranyl diphosphate-binding residues include Arg-284, Asp-321, Asp-325, Arg-460, and Asn-463. Residues Asp-321 and Asp-325 each contribute to the Mg(2+) site. A DDXXD motif motif is present at residues Asp-321 to Asp-325. Residues Asn-463, Thr-467, and Glu-471 each coordinate Mg(2+).

The protein belongs to the terpene synthase family. Tpsb subfamily. The cofactor is Mg(2+). Mn(2+) serves as cofactor.

Its function is as follows. Catalyzes the formation of santalene. The sequence is that of Probable santalene synthase (SSY) from Santalum murrayanum (Bitter quandong).